The sequence spans 544 residues: Chaperonin GroEL (544 aa).

Residues 30–33, Lys51, 87–91, Gly415, and Asp495 each bind ATP; these read TLGP and DGTTT.

This sequence belongs to the chaperonin (HSP60) family. Forms a cylinder of 14 subunits composed of two heptameric rings stacked back-to-back. Interacts with the co-chaperonin GroES.

Its subcellular location is the cytoplasm. The enzyme catalyses ATP + H2O + a folded polypeptide = ADP + phosphate + an unfolded polypeptide.. In terms of biological role, together with its co-chaperonin GroES, plays an essential role in assisting protein folding. The GroEL-GroES system forms a nano-cage that allows encapsulation of the non-native substrate proteins and provides a physical environment optimized to promote and accelerate protein folding. The polypeptide is Chaperonin GroEL (Aeromonas salmonicida (strain A449)).